Reading from the N-terminus, the 359-residue chain is 4-hydroxy-3-methylbut-2-en-1-yl diphosphate synthase (flavodoxin) (359 aa).

Residues cysteine 264, cysteine 267, cysteine 299, and glutamate 306 each coordinate [4Fe-4S] cluster.

It belongs to the IspG family. It depends on [4Fe-4S] cluster as a cofactor.

It carries out the reaction (2E)-4-hydroxy-3-methylbut-2-enyl diphosphate + oxidized [flavodoxin] + H2O + 2 H(+) = 2-C-methyl-D-erythritol 2,4-cyclic diphosphate + reduced [flavodoxin]. Its pathway is isoprenoid biosynthesis; isopentenyl diphosphate biosynthesis via DXP pathway; isopentenyl diphosphate from 1-deoxy-D-xylulose 5-phosphate: step 5/6. Its function is as follows. Converts 2C-methyl-D-erythritol 2,4-cyclodiphosphate (ME-2,4cPP) into 1-hydroxy-2-methyl-2-(E)-butenyl 4-diphosphate. The polypeptide is 4-hydroxy-3-methylbut-2-en-1-yl diphosphate synthase (flavodoxin) (Helicobacter pylori (strain J99 / ATCC 700824) (Campylobacter pylori J99)).